The chain runs to 324 residues: Fructose-1,6-bisphosphatase class 1 (324 aa).

Mg(2+) contacts are provided by glutamate 88, aspartate 107, leucine 109, and aspartate 110. Residues aspartate 110–serine 113, asparagine 199, and lysine 265 each bind substrate. Glutamate 271 contributes to the Mg(2+) binding site.

It belongs to the FBPase class 1 family. In terms of assembly, homotetramer. Mg(2+) serves as cofactor.

Its subcellular location is the cytoplasm. The enzyme catalyses beta-D-fructose 1,6-bisphosphate + H2O = beta-D-fructose 6-phosphate + phosphate. Its pathway is carbohydrate biosynthesis; gluconeogenesis. The protein is Fructose-1,6-bisphosphatase class 1 of Neisseria meningitidis serogroup B (strain ATCC BAA-335 / MC58).